Consider the following 270-residue polypeptide: Energy-coupling factor transporter ATP-binding protein EcfA (270 aa).

One can recognise an ABC transporter domain in the interval 5 to 238 (VEIENLTFFY…QLLEQNGLKA (234 aa)). 38–45 (GHNGAGKS) contributes to the ATP binding site.

Belongs to the ABC transporter superfamily. Energy-coupling factor EcfA family. In terms of assembly, forms a stable energy-coupling factor (ECF) transporter complex composed of 2 membrane-embedded substrate-binding proteins (S component), 2 ATP-binding proteins (A component) and 2 transmembrane proteins (T component).

It is found in the cell membrane. ATP-binding (A) component of a common energy-coupling factor (ECF) ABC-transporter complex. Unlike classic ABC transporters this ECF transporter provides the energy necessary to transport a number of different substrates. The polypeptide is Energy-coupling factor transporter ATP-binding protein EcfA (Carboxydothermus hydrogenoformans (strain ATCC BAA-161 / DSM 6008 / Z-2901)).